The following is a 284-amino-acid chain: Tropomyosin (284 aa).

Positions 1–47 (MDAIKKKMQAMKIEKDNAMDRADAAEEKARQQQERVEKLEEELRDTQ) are disordered. Positions 1 to 284 (MDAIKKKMQA…DQTFQELSGY (284 aa)) form a coiled coil. Positions 12–38 (KIEKDNAMDRADAAEEKARQQQERVEK) are enriched in basic and acidic residues.

Belongs to the tropomyosin family.

In terms of biological role, tropomyosin, in association with the troponin complex, plays a central role in the calcium dependent regulation of muscle contraction. The chain is Tropomyosin from Trichinella spiralis (Trichina worm).